Here is a 284-residue protein sequence, read N- to C-terminus: D-tagatose-1,6-bisphosphate aldolase subunit GatY (284 aa).

D82 serves as the catalytic Proton donor. Zn(2+) is bound by residues H83 and H180. G181 contacts dihydroxyacetone phosphate. Position 208 (H208) interacts with Zn(2+). Dihydroxyacetone phosphate-binding positions include 209 to 211 (GAS) and 230 to 233 (NVAT).

This sequence belongs to the class II fructose-bisphosphate aldolase family. TagBP aldolase GatY subfamily. Forms a complex with GatZ. Requires Zn(2+) as cofactor.

It carries out the reaction D-tagatofuranose 1,6-bisphosphate = D-glyceraldehyde 3-phosphate + dihydroxyacetone phosphate. Its pathway is carbohydrate metabolism; D-tagatose 6-phosphate degradation; D-glyceraldehyde 3-phosphate and glycerone phosphate from D-tagatose 6-phosphate: step 2/2. Catalytic subunit of the tagatose-1,6-bisphosphate aldolase GatYZ, which catalyzes the reversible aldol condensation of dihydroxyacetone phosphate (DHAP or glycerone-phosphate) with glyceraldehyde 3-phosphate (G3P) to produce tagatose 1,6-bisphosphate (TBP). Requires GatZ subunit for full activity and stability. Is involved in the catabolism of galactitol. This chain is D-tagatose-1,6-bisphosphate aldolase subunit GatY, found in Shigella flexneri serotype 5b (strain 8401).